The sequence spans 106 residues: UPF0642 protein YBL028C (106 aa).

Polar residues predominate over residues 1–12 (MAKSLRASSHLN). Disordered regions lie at residues 1 to 21 (MAKS…RRGV) and 52 to 106 (KEEQ…FTRF). Residues 62–72 (DEKKSNEEAPR) show a composition bias toward basic and acidic residues. Positions 83 to 106 (GRHHTYKKAKLMKQSKKKTSFTRF) are enriched in basic residues.

Belongs to the UPF0642 family.

The chain is UPF0642 protein YBL028C from Saccharomyces cerevisiae (strain ATCC 204508 / S288c) (Baker's yeast).